Consider the following 414-residue polypeptide: DNA primase small subunit PriS (414 aa).

Active-site residues include aspartate 98, aspartate 100, and aspartate 312.

This sequence belongs to the eukaryotic-type primase small subunit family. As to quaternary structure, heterodimer of a small subunit (PriS) and a large subunit (PriL). It depends on Mg(2+) as a cofactor. Mn(2+) is required as a cofactor.

In terms of biological role, catalytic subunit of DNA primase, an RNA polymerase that catalyzes the synthesis of short RNA molecules used as primers for DNA polymerase during DNA replication. The small subunit contains the primase catalytic core and has DNA synthesis activity on its own. Binding to the large subunit stabilizes and modulates the activity, increasing the rate of DNA synthesis while decreasing the length of the DNA fragments, and conferring RNA synthesis capability. The DNA polymerase activity may enable DNA primase to also catalyze primer extension after primer synthesis. May also play a role in DNA repair. The sequence is that of DNA primase small subunit PriS from Methanosarcina barkeri (strain Fusaro / DSM 804).